A 61-amino-acid chain; its full sequence is Protein stunted (61 aa).

The segment at alanine 3–serine 15 is sufficient for mth activation.

This sequence belongs to the eukaryotic ATPase epsilon family.

Its function is as follows. Activates the G-protein coupled receptor mth in vitro, leading to increased intracellular calcium ion levels. The chain is Protein stunted from Drosophila melanogaster (Fruit fly).